A 220-amino-acid polypeptide reads, in one-letter code: Polyadenylate-binding protein 2 (220 aa).

A disordered region spans residues 1–24 (MEEEEHEVYGGEIPDVGEMDGDME). Positions 34–74 (AADDDAVKELDEMKKRLKEMEDEAAALREMQAKVEKEMGAQ) form a coiled coil. The tract at residues 78–219 (SIAANQAGKE…FRRPMRYMPY (142 aa)) is necessary for homooligomerization. Residues 92–168 (RSVFVGNVDY…RQLKVLQKRT (77 aa)) form the RRM domain. A Nuclear localization signal motif is present at residues 165 to 172 (QKRTNVPG).

In terms of assembly, monomer and homooligomer. Binds RNA as a monomer and oligomerizes when bound to poly(A). Forms a complex with cleavage and polyadenylation specificity factor (CPSF) subunits PAPS2, FIPS5, PABN3 and PABN1. Interacts with CSP3.

The protein localises to the nucleus speckle. It is found in the cytoplasm. Involved in the 3'-end formation of mRNA precursors (pre-mRNA) by the addition of a poly(A) tail of 200-250 nt to the upstream cleavage product. Stimulates poly(A) polymerase (PAPOLA) conferring processivity on the poly(A) tail elongation reaction and also controls the poly(A) tail length. Increases the affinity of poly(A) polymerase for RNA. Binds to poly(A) and to poly(G) with high affinity. May protect the poly(A) tail from degradation. The protein is Polyadenylate-binding protein 2 of Arabidopsis thaliana (Mouse-ear cress).